The following is a 524-amino-acid chain: Xanthotoxin 5-hydroxylase CYP82C4 (524 aa).

A helical transmembrane segment spans residues 1 to 21 (MDTSLFSLFVPILVFVFIALF). Cys-463 is a heme binding site.

The protein belongs to the cytochrome P450 family. Requires heme as cofactor. As to expression, expressed in both primary and lateral roots under iron-deficient conditions, except in apical root zones, and mostly in the root epidermal layer.

The protein localises to the membrane. The enzyme catalyses fraxetin + reduced [NADPH--hemoprotein reductase] + O2 = sideretin (reduced form) + oxidized [NADPH--hemoprotein reductase] + H2O + H(+). It catalyses the reaction xanthotoxin + reduced [NADPH--hemoprotein reductase] + O2 = 5-hydroxyxanthotoxin + oxidized [NADPH--hemoprotein reductase] + H2O + 2 H(+). It functions in the pathway phenylpropanoid metabolism. Its function is as follows. Can hydroxylate xanthotoxin (8-methoxypsoralen) to form 5-hydroxyxanthotoxin (5-hydroxy-8-methoxypsoralen) in vivo and in vitro. Involved in the early iron deficiency response, possibly through an IDE1-like mediated pathway. Involved in the pathway of sideretin biosynthesis from feruloyl CoA, a redox-active catecholic metabolite exuded by roots in response to iron deficiency in order to facilitate the uptake of iron; this pathway consists in the successive conversion from feruloyl CoA to scopoletin, from scopoletin to fraxetin and from fraxetin to sideretin. Catalyzes the biosynthesis of sideretin via fraxetin hydroxylation. The chain is Xanthotoxin 5-hydroxylase CYP82C4 from Arabidopsis thaliana (Mouse-ear cress).